A 564-amino-acid chain; its full sequence is Excitatory amino acid transporter 4 (564 aa).

Residues 1–55 (MSSHGNSLFLRESGQRLGRVGWLQRLQESLQQRALRTRLRLQTMTREHVLRFLRR) are Cytoplasmic-facing. Ser2 is subject to Phosphoserine. Transmembrane regions (helical) follow at residues 56-76 (NAFI…AFAL), 99-119 (MLQM…MASL), and 133-153 (VYYM…VTII). N-linked (GlcNAc...) asparagine glycosylation is found at Asn216, Asn232, and Asn239. A run of 3 helical transmembrane segments spans residues 262–285 (SANG…IGGV), 295–322 (FFDS…LFLI), and 344–365 (LTVI…YFLI). The segment at residues 371-401 (FPFIGGVLQALITAMGTSSSSATLPITFRCL) is an intramembrane region (discontinuously helical). Residue 388–390 (SSS) participates in L-aspartate binding. A helical transmembrane segment spans residues 411–437 (ITRFVLPVGATVNMDGTALYEALAAIF). Na(+) contacts are provided by Gly419, Thr421, and Asn423. Residues Thr427, 468-472 (IPQAG), Asp501, and Asn508 each bind L-aspartate. The discontinuously helical intramembrane region spans 451–484 (ITTISITATAASVGAAGIPQAGLVTMVIVLTSVG). A helical membrane pass occupies residues 498–519 (WFLDRLRTMTNVLGDSIGAAVI). Na(+)-binding residues include Asn508 and Asp512.

Belongs to the dicarboxylate/amino acid:cation symporter (DAACS) (TC 2.A.23) family. SLC1A6 subfamily. As to quaternary structure, homotrimer. As to expression, detected in brain, cerebellum and hippocampus.

The protein localises to the cell membrane. It catalyses the reaction K(+)(in) + L-glutamate(out) + 3 Na(+)(out) + H(+)(out) = K(+)(out) + L-glutamate(in) + 3 Na(+)(in) + H(+)(in). The catalysed reaction is K(+)(in) + L-aspartate(out) + 3 Na(+)(out) + H(+)(out) = K(+)(out) + L-aspartate(in) + 3 Na(+)(in) + H(+)(in). The enzyme catalyses D-aspartate(out) + K(+)(in) + 3 Na(+)(out) + H(+)(out) = D-aspartate(in) + K(+)(out) + 3 Na(+)(in) + H(+)(in). Its function is as follows. Sodium-dependent, high-affinity amino acid transporter that mediates the uptake of L-glutamate and also L-aspartate and D-aspartate. Functions as a symporter that transports one amino acid molecule together with two or three Na(+) ions and one proton, in parallel with the counter-transport of one K(+) ion. Mediates Cl(-) flux that is not coupled to amino acid transport; this avoids the accumulation of negative charges due to aspartate and Na(+) symport. Plays a redundant role in the rapid removal of released glutamate from the synaptic cleft, which is essential for terminating the postsynaptic action of glutamate. The protein is Excitatory amino acid transporter 4 (SLC1A6) of Canis lupus familiaris (Dog).